Reading from the N-terminus, the 224-residue chain is Polyadenylate-binding protein 2 (224 aa).

Acidic residues predominate over residues 1 to 36; that stretch reads MADEDITLNEDQLLESLEETNGEQETEIATEVEEEG. The tract at residues 1-40 is disordered; that stretch reads MADEDITLNEDQLLESLEETNGEQETEIATEVEEEGSMQI. Residues 9 to 74 adopt a coiled-coil conformation; sequence NEDQLLESLE…QSEVDKQMAG (66 aa). An RRM domain is found at 96–173; the sequence is RSVYVGNVDY…RQIKVMSKRT (78 aa).

As to quaternary structure, interacts with ZC3H3. As to expression, expressed ubiquitously in all transcriptionally active cells.

Its subcellular location is the nucleus. It localises to the cytoplasm. Functionally, involved in the 3'-end formation of mRNA precursors (pre-mRNA) by the addition of a poly(A) tail of 200-250 nt to the upstream cleavage product. Stimulates poly(A) polymerase (PAPOLA) conferring processivity on the poly(A) tail elongation reaction and also controls the poly(A) tail length. Increases the affinity of poly(A) polymerase for RNA. Binds to poly(A) and to poly(G) with high affinity. May protect the poly(A) tail from degradation. Plays a role in the positive regulation of alpha-1,3 fucosylation, possibly by cooperating with swm which regulates nuclear export of fucosyltransferase FucTA. Involved in germline stem cell transit amplification, differentiation and mitosis-to-meiosis transition. This is Polyadenylate-binding protein 2 from Drosophila melanogaster (Fruit fly).